The chain runs to 428 residues: D-alanine--D-alanine ligase (428 aa).

The 220-residue stretch at 205–424 (KVVLDAAGIP…YTELITRLIE (220 aa)) folds into the ATP-grasp domain. 237-299 (DAGLTYPLFV…EQGIDGREIE (63 aa)) contacts ATP. Asp-378, Glu-391, and Asn-393 together coordinate Mg(2+).

Belongs to the D-alanine--D-alanine ligase family. It depends on Mg(2+) as a cofactor. Mn(2+) serves as cofactor.

It is found in the cytoplasm. It carries out the reaction 2 D-alanine + ATP = D-alanyl-D-alanine + ADP + phosphate + H(+). Its pathway is cell wall biogenesis; peptidoglycan biosynthesis. In terms of biological role, cell wall formation. This Bifidobacterium longum (strain NCC 2705) protein is D-alanine--D-alanine ligase.